The primary structure comprises 615 residues: MEIFMPKLRSATSTQGRNMAGARSLWRATGMKEGDFGKPIIAVVNSFTQFVPGHVHLHDIGQMVVKQIEAAGGVAKEFNTIAVDDGIAMGHGGMLYSLPSRDLIADSVEYMVNAHCADAMVCISNCDKITPGMLMAAMRLNIPTIFVSGGPMEAGKTKLSDQLIKLDLIDAMIQSADKNVSDSDVDAIERSACPTCGSCSGMFTANSMNCLTEALGLSLPGNGSCLATHADRKQLFLDAATQIVELCKRHYEQDDYSVLPRSIATKAAFENAMSLDIAMGGSTNTVLHLLAVAQEAEVDFTMADIDRLSRIVPCLSKVAPNTNKYHMEDVHRAGGVMAILGELDRANLLHHDTKTVLGLTFAEQLAKYDIKLTRDEAVKTFYRSGPAGIRTTEAFSQDCRWETLDDDRENGCIRDKAHAYSQDGGLAMLSGNIALDGCIVKTAGVDESILKFTGEAIVFESQEDAVDGILGGKVKAGHVVVIRYEGPKGGPGMQEMLYPTSYLKSMGLGKACALLTDGRFSGGTSGLSIGHCSPEAASGGTIGLVRNGDIIAIDIPNRSIQLQVSDEELATRRAEQDVKGWKPANRAREVSFALKVFGHFATSADKGAVRDKTKL.

A Mg(2+)-binding site is contributed by Asp85. Position 126 (Cys126) interacts with [2Fe-2S] cluster. Mg(2+)-binding residues include Asp127 and Lys128. Residue Lys128 is modified to N6-carboxylysine. Position 199 (Cys199) interacts with [2Fe-2S] cluster. Residue Glu495 coordinates Mg(2+). Ser521 serves as the catalytic Proton acceptor.

This sequence belongs to the IlvD/Edd family. As to quaternary structure, homodimer. The cofactor is [2Fe-2S] cluster. Mg(2+) serves as cofactor.

It catalyses the reaction (2R)-2,3-dihydroxy-3-methylbutanoate = 3-methyl-2-oxobutanoate + H2O. The catalysed reaction is (2R,3R)-2,3-dihydroxy-3-methylpentanoate = (S)-3-methyl-2-oxopentanoate + H2O. Its pathway is amino-acid biosynthesis; L-isoleucine biosynthesis; L-isoleucine from 2-oxobutanoate: step 3/4. It functions in the pathway amino-acid biosynthesis; L-valine biosynthesis; L-valine from pyruvate: step 3/4. Its function is as follows. Functions in the biosynthesis of branched-chain amino acids. Catalyzes the dehydration of (2R,3R)-2,3-dihydroxy-3-methylpentanoate (2,3-dihydroxy-3-methylvalerate) into 2-oxo-3-methylpentanoate (2-oxo-3-methylvalerate) and of (2R)-2,3-dihydroxy-3-methylbutanoate (2,3-dihydroxyisovalerate) into 2-oxo-3-methylbutanoate (2-oxoisovalerate), the penultimate precursor to L-isoleucine and L-valine, respectively. In Mannheimia succiniciproducens (strain KCTC 0769BP / MBEL55E), this protein is Dihydroxy-acid dehydratase.